The chain runs to 497 residues: Glutamate--tRNA ligase (497 aa).

Residues Pro-13–Thr-23 carry the 'HIGH' region motif. A 'KMSKS' region motif is present at residues Lys-253 to Arg-257. Lys-256 is a binding site for ATP.

This sequence belongs to the class-I aminoacyl-tRNA synthetase family. Glutamate--tRNA ligase type 1 subfamily. Monomer.

Its subcellular location is the cytoplasm. The enzyme catalyses tRNA(Glu) + L-glutamate + ATP = L-glutamyl-tRNA(Glu) + AMP + diphosphate. Its function is as follows. Catalyzes the attachment of glutamate to tRNA(Glu) in a two-step reaction: glutamate is first activated by ATP to form Glu-AMP and then transferred to the acceptor end of tRNA(Glu). This is Glutamate--tRNA ligase from Cutibacterium acnes (strain DSM 16379 / KPA171202) (Propionibacterium acnes).